The chain runs to 711 residues: Ribosomal RNA large subunit methyltransferase K/L (711 aa).

The THUMP domain occupies 43 to 154 (TLYRTLLWSR…RENLVISLDL (112 aa)).

It belongs to the methyltransferase superfamily. RlmKL family.

Its subcellular location is the cytoplasm. It catalyses the reaction guanosine(2445) in 23S rRNA + S-adenosyl-L-methionine = N(2)-methylguanosine(2445) in 23S rRNA + S-adenosyl-L-homocysteine + H(+). It carries out the reaction guanosine(2069) in 23S rRNA + S-adenosyl-L-methionine = N(2)-methylguanosine(2069) in 23S rRNA + S-adenosyl-L-homocysteine + H(+). Functionally, specifically methylates the guanine in position 2445 (m2G2445) and the guanine in position 2069 (m7G2069) of 23S rRNA. The protein is Ribosomal RNA large subunit methyltransferase K/L of Haemophilus influenzae (strain PittEE).